We begin with the raw amino-acid sequence, 158 residues long: MAKVFEGHLIGEGLRFGIVVARFNEFITHKLLSGAQDALIRHGVAENDIEVAWVPGAFEIPLVARRMLARNRYDAVLCLGTVIRGGTPHFEYVASEVAKGVAKVGLETGTPVIFGVITADTIEQAIERAGTKAGNKGWQAAVSGIEMANLVRRLESSS.

Residues phenylalanine 23, alanine 57–glutamate 59, and threonine 81–isoleucine 83 each bind 5-amino-6-(D-ribitylamino)uracil. Residue glycine 86–threonine 87 participates in (2S)-2-hydroxy-3-oxobutyl phosphate binding. Histidine 89 functions as the Proton donor in the catalytic mechanism. Phenylalanine 114 contributes to the 5-amino-6-(D-ribitylamino)uracil binding site. (2S)-2-hydroxy-3-oxobutyl phosphate is bound at residue arginine 128.

It belongs to the DMRL synthase family.

The catalysed reaction is (2S)-2-hydroxy-3-oxobutyl phosphate + 5-amino-6-(D-ribitylamino)uracil = 6,7-dimethyl-8-(1-D-ribityl)lumazine + phosphate + 2 H2O + H(+). It participates in cofactor biosynthesis; riboflavin biosynthesis; riboflavin from 2-hydroxy-3-oxobutyl phosphate and 5-amino-6-(D-ribitylamino)uracil: step 1/2. Its function is as follows. Catalyzes the formation of 6,7-dimethyl-8-ribityllumazine by condensation of 5-amino-6-(D-ribitylamino)uracil with 3,4-dihydroxy-2-butanone 4-phosphate. This is the penultimate step in the biosynthesis of riboflavin. This chain is 6,7-dimethyl-8-ribityllumazine synthase, found in Desulforudis audaxviator (strain MP104C).